Here is a 241-residue protein sequence, read N- to C-terminus: Phosphoadenosine 5'-phosphosulfate reductase (241 aa).

Residue C235 is the Nucleophile; cysteine thiosulfonate intermediate of the active site.

The protein belongs to the PAPS reductase family. CysH subfamily.

It localises to the cytoplasm. It catalyses the reaction [thioredoxin]-disulfide + sulfite + adenosine 3',5'-bisphosphate + 2 H(+) = [thioredoxin]-dithiol + 3'-phosphoadenylyl sulfate. The protein operates within sulfur metabolism; hydrogen sulfide biosynthesis; sulfite from sulfate: step 3/3. Its function is as follows. Catalyzes the formation of sulfite from phosphoadenosine 5'-phosphosulfate (PAPS) using thioredoxin as an electron donor. The polypeptide is Phosphoadenosine 5'-phosphosulfate reductase (Xanthomonas campestris pv. campestris (strain 8004)).